The following is a 254-amino-acid chain: MPVRCQQSPVLAGSATLAALGALALYFAEPSGYGKYTESLTPAAIRLPARAAWFLQELPSFVVPAGILAGQPRSLFGPPATVLLGLFCAHYFHRTFVYSLLTRGRPFPVVFLFRGFVFCMGNGLLQGYYLVYCAEYPAEWYTDIRFSLGVFLFILGMGINIHSDYILRQLRKPGEVIYKIPQGGLFTYVSGANFLGEIIEWIGYALATWSLPALAFAFFSLCFLGLRAFHHHRFYVKMFEDYPKSRKALIPFIF.

Transmembrane regions (helical) follow at residues 8-28 (SPVL…LYFA), 72-92 (PRSL…AHYF), 146-166 (FSLG…SDYI), and 206-226 (LATW…FLGL).

It belongs to the steroid 5-alpha reductase family.

The protein resides in the microsome membrane. The protein localises to the endoplasmic reticulum membrane. It carries out the reaction a 3-oxo-5alpha-steroid + NADP(+) = a 3-oxo-Delta(4)-steroid + NADPH + H(+). The catalysed reaction is 17beta-hydroxy-5alpha-androstan-3-one + NADP(+) = testosterone + NADPH + H(+). The enzyme catalyses 5alpha-pregnane-3,20-dione + NADP(+) = progesterone + NADPH + H(+). Converts testosterone (T) into 5-alpha-dihydrotestosterone (DHT) and progesterone or corticosterone into their corresponding 5-alpha-3-oxosteroids. It plays a central role in sexual differentiation and androgen physiology. The chain is 3-oxo-5-alpha-steroid 4-dehydrogenase 2 (SRD5A2) from Sus scrofa (Pig).